Here is a 353-residue protein sequence, read N- to C-terminus: Photosystem II protein D1 (353 aa).

N-acetylthreonine is present on threonine 2. Threonine 2 carries the post-translational modification Phosphothreonine. The next 3 helical transmembrane spans lie at tyrosine 29–serine 46, histidine 118–leucine 133, and tryptophan 142–alanine 156. Residue histidine 118 coordinates chlorophyll a. A pheophytin a-binding site is contributed by tyrosine 126. [CaMn4O5] cluster is bound by residues aspartate 170 and glutamate 189. The helical transmembrane segment at phenylalanine 197 to leucine 218 threads the bilayer. Residue histidine 198 coordinates chlorophyll a. Residues histidine 215 and serine 264–phenylalanine 265 contribute to the a quinone site. Histidine 215 lines the Fe cation pocket. Histidine 272 contacts Fe cation. Residues phenylalanine 274–leucine 288 traverse the membrane as a helical segment. [CaMn4O5] cluster-binding residues include histidine 332, glutamate 333, aspartate 342, and alanine 344. Residues alanine 345–glycine 353 constitute a propeptide that is removed on maturation.

The protein belongs to the reaction center PufL/M/PsbA/D family. As to quaternary structure, PSII is composed of 1 copy each of membrane proteins PsbA, PsbB, PsbC, PsbD, PsbE, PsbF, PsbH, PsbI, PsbJ, PsbK, PsbL, PsbM, PsbT, PsbX, PsbY, PsbZ, Psb30/Ycf12, at least 3 peripheral proteins of the oxygen-evolving complex and a large number of cofactors. It forms dimeric complexes. The D1/D2 heterodimer binds P680, chlorophylls that are the primary electron donor of PSII, and subsequent electron acceptors. It shares a non-heme iron and each subunit binds pheophytin, quinone, additional chlorophylls, carotenoids and lipids. D1 provides most of the ligands for the Mn4-Ca-O5 cluster of the oxygen-evolving complex (OEC). There is also a Cl(-1) ion associated with D1 and D2, which is required for oxygen evolution. The PSII complex binds additional chlorophylls, carotenoids and specific lipids. is required as a cofactor. Tyr-161 forms a radical intermediate that is referred to as redox-active TyrZ, YZ or Y-Z. In terms of processing, C-terminally processed by CTPA; processing is essential to allow assembly of the oxygen-evolving complex and thus photosynthetic growth.

Its subcellular location is the plastid. The protein resides in the chloroplast thylakoid membrane. The enzyme catalyses 2 a plastoquinone + 4 hnu + 2 H2O = 2 a plastoquinol + O2. Photosystem II (PSII) is a light-driven water:plastoquinone oxidoreductase that uses light energy to abstract electrons from H(2)O, generating O(2) and a proton gradient subsequently used for ATP formation. It consists of a core antenna complex that captures photons, and an electron transfer chain that converts photonic excitation into a charge separation. The D1/D2 (PsbA/PsbD) reaction center heterodimer binds P680, the primary electron donor of PSII as well as several subsequent electron acceptors. This is Photosystem II protein D1 from Lolium perenne (Perennial ryegrass).